The sequence spans 781 residues: Zinc finger protein klf1 (781 aa).

2 C2H2-type zinc fingers span residues 17–41 and 47–70; these read YKCD…FRSH and FICP…NQKH.

The protein localises to the nucleus. It is found in the cytoplasm. It localises to the cytoskeleton. Its subcellular location is the spindle. In terms of biological role, required for maintaining cell viability in nitrogen-deficient stationary phase (G0) cells. This Schizosaccharomyces pombe (strain 972 / ATCC 24843) (Fission yeast) protein is Zinc finger protein klf1 (klf1).